We begin with the raw amino-acid sequence, 193 residues long: Potassium-transporting ATPase KdpC subunit (193 aa).

Residues Pro7 to Met27 form a helical membrane-spanning segment.

This sequence belongs to the KdpC family. The system is composed of three essential subunits: KdpA, KdpB and KdpC.

The protein resides in the cell inner membrane. Part of the high-affinity ATP-driven potassium transport (or Kdp) system, which catalyzes the hydrolysis of ATP coupled with the electrogenic transport of potassium into the cytoplasm. This subunit acts as a catalytic chaperone that increases the ATP-binding affinity of the ATP-hydrolyzing subunit KdpB by the formation of a transient KdpB/KdpC/ATP ternary complex. This Paraburkholderia phymatum (strain DSM 17167 / CIP 108236 / LMG 21445 / STM815) (Burkholderia phymatum) protein is Potassium-transporting ATPase KdpC subunit.